The primary structure comprises 326 residues: Neuferricin homolog (326 aa).

Residues 1–34 form the signal peptide; that stretch reads MEKNRRKKDDAGVMTKTLAGVAALTFLVSFICSS. Positions 98–197 constitute a Cytochrome b5 heme-binding domain; it reads KHVFTPEQLH…KEYPLVGVVA (100 aa).

The protein belongs to the cytochrome b5 family. MAPR subfamily.

The protein localises to the secreted. In terms of biological role, heme-binding protein. The polypeptide is Neuferricin homolog (Caenorhabditis briggsae).